Reading from the N-terminus, the 199-residue chain is Thymidylate kinase (199 aa).

7-14 is an ATP binding site; sequence GIDGSGKT.

The protein belongs to the thymidylate kinase family.

The catalysed reaction is dTMP + ATP = dTDP + ADP. Its function is as follows. Phosphorylation of dTMP to form dTDP in both de novo and salvage pathways of dTTP synthesis. This is Thymidylate kinase from Tropheryma whipplei (strain Twist) (Whipple's bacillus).